The chain runs to 290 residues: Short chain dehydrogenase/reductase nsrO (290 aa).

The NADP(+) site is built by Ile-37 and Lys-149. Catalysis depends on proton donor residues Ser-168 and Tyr-182. Residues Tyr-182, Lys-186, and Thr-221 each contribute to the NADP(+) site. Lys-186 acts as the Lowers pKa of active site Tyr in catalysis.

The protein belongs to the short-chain dehydrogenases/reductases (SDR) family.

It functions in the pathway secondary metabolite biosynthesis. In terms of biological role, short chain dehydrogenase/reductase; part of the gene cluster that mediates the biosynthesis of the tetrahydroxanthone dimer neosartorin, which exhibits antibacterial activity. The two different monomeric units appear to be synthesized by the same set of enzymes, among which the Baeyer-Villiger monooxygenase nsrF is the key enzyme for the divergence of the biosynthetic routes. The pathway begins with the synthesis of atrochrysone thioester by the polyketide synthase nsrB. The atrochrysone carboxyl ACP thioesterase nsrC then breaks the thioester bond and releases the atrochrysone carboxylic acid from AacuL. Atrochrysone carboxylic acid is decarboxylated by the decarboxylase nsrE, and oxidized by the anthrone oxygenase nsrD to yield emodin. Emodin is then reduced to emodin hydroquinone by the oxidoreductase nsrR. A-ring reduction by the short chain dehydrogenase nsrJ, dehydration by the scytalone dehydratase-like protein nsrI and probable spontaneous re-oxidation, results in overall deoxygenation to chrysophanol. The Baeyer-Villiger monooxygenase nsrF accepts chrysophanol as a substrate to insert one oxygen atom at two different positions to yield the precursors of both monomric units. NsrF is promiscuous/flexible in interacting with the 2 (non methylated and methylated) aromatic rings of chrysophanol, thus diverging the biosynthetic pathway at this point. After the hydrolysis of the lactones, methylesterification by the methyltransferase nsrG yields respectively moniliphenone and 2,2',6'-trihydroxy-4-methyl-6-methoxya-cyldiphenylmethanone. The next steps are the hydroxylation by the FAD-dependent monooxygenase nsrK, followed by isomerization by the monooxygenase nsrQ. The short chain dehydrogenase/reductase nsrO then catalyzes the C-5 ketoreduction to give the xanthone skeleton of blennolide C and 5-acetylblennolide A. The acetyltransferase nsrL has a strict substrate specificity and uses only blennolide A but not blennolide C to yield 5-acetylblennolide A as the single-acetylated product. In the final step of the biosynthesis, the heterodimerization of the 2 xanthones, blennolide C and 5-acetylblennolide A, is catalyzed by the cytochrome P450 monooxygenase nsrP. NsrP can utilize at least three different xanthones as its substrates to perform the dimerization reaction. The protein is Short chain dehydrogenase/reductase nsrO of Aspergillus novofumigatus (strain IBT 16806).